A 194-amino-acid chain; its full sequence is Ribose 1,5-bisphosphate phosphokinase PhnN (194 aa).

An ATP-binding site is contributed by 24–31; that stretch reads GPSGAGKD.

Belongs to the ribose 1,5-bisphosphokinase family.

It catalyses the reaction alpha-D-ribose 1,5-bisphosphate + ATP = 5-phospho-alpha-D-ribose 1-diphosphate + ADP. It functions in the pathway metabolic intermediate biosynthesis; 5-phospho-alpha-D-ribose 1-diphosphate biosynthesis; 5-phospho-alpha-D-ribose 1-diphosphate from D-ribose 5-phosphate (route II): step 3/3. Its function is as follows. Catalyzes the phosphorylation of ribose 1,5-bisphosphate to 5-phospho-D-ribosyl alpha-1-diphosphate (PRPP). The polypeptide is Ribose 1,5-bisphosphate phosphokinase PhnN (Rhodopseudomonas palustris (strain ATCC BAA-98 / CGA009)).